The following is a 209-amino-acid chain: Large ribosomal subunit protein uL3 (209 aa).

Belongs to the universal ribosomal protein uL3 family. As to quaternary structure, part of the 50S ribosomal subunit. Forms a cluster with proteins L14 and L19.

In terms of biological role, one of the primary rRNA binding proteins, it binds directly near the 3'-end of the 23S rRNA, where it nucleates assembly of the 50S subunit. The chain is Large ribosomal subunit protein uL3 from Carboxydothermus hydrogenoformans (strain ATCC BAA-161 / DSM 6008 / Z-2901).